The primary structure comprises 197 residues: Large ribosomal subunit protein bL25 (197 aa).

Belongs to the bacterial ribosomal protein bL25 family. CTC subfamily. Part of the 50S ribosomal subunit; part of the 5S rRNA/L5/L18/L25 subcomplex. Contacts the 5S rRNA. Binds to the 5S rRNA independently of L5 and L18.

Its function is as follows. This is one of the proteins that binds to the 5S RNA in the ribosome where it forms part of the central protuberance. The polypeptide is Large ribosomal subunit protein bL25 (Hydrogenobaculum sp. (strain Y04AAS1)).